Consider the following 82-residue polypeptide: Small ribosomal subunit protein bS18 (82 aa).

The protein belongs to the bacterial ribosomal protein bS18 family. As to quaternary structure, part of the 30S ribosomal subunit. Forms a tight heterodimer with protein bS6.

In terms of biological role, binds as a heterodimer with protein bS6 to the central domain of the 16S rRNA, where it helps stabilize the platform of the 30S subunit. The sequence is that of Small ribosomal subunit protein bS18 from Chlamydia pneumoniae (Chlamydophila pneumoniae).